We begin with the raw amino-acid sequence, 300 residues long: Bifunctional protein FolD 1 (300 aa).

Residues 166 to 168 (GRS), serine 191, and isoleucine 232 each bind NADP(+).

It belongs to the tetrahydrofolate dehydrogenase/cyclohydrolase family. As to quaternary structure, homodimer.

The catalysed reaction is (6R)-5,10-methylene-5,6,7,8-tetrahydrofolate + NADP(+) = (6R)-5,10-methenyltetrahydrofolate + NADPH. It carries out the reaction (6R)-5,10-methenyltetrahydrofolate + H2O = (6R)-10-formyltetrahydrofolate + H(+). The protein operates within one-carbon metabolism; tetrahydrofolate interconversion. Its function is as follows. Catalyzes the oxidation of 5,10-methylenetetrahydrofolate to 5,10-methenyltetrahydrofolate and then the hydrolysis of 5,10-methenyltetrahydrofolate to 10-formyltetrahydrofolate. This is Bifunctional protein FolD 1 from Roseobacter denitrificans (strain ATCC 33942 / OCh 114) (Erythrobacter sp. (strain OCh 114)).